The following is a 159-amino-acid chain: NADH-quinone oxidoreductase subunit I (159 aa).

2 consecutive 4Fe-4S ferredoxin-type domains span residues 51 to 80 and 90 to 119; these read RRYE…IEAD and TRYD…EGPN. [4Fe-4S] cluster-binding residues include C60, C63, C66, C70, C99, C102, C105, and C109.

The protein belongs to the complex I 23 kDa subunit family. As to quaternary structure, NDH-1 is composed of 14 different subunits. Subunits NuoA, H, J, K, L, M, N constitute the membrane sector of the complex. It depends on [4Fe-4S] cluster as a cofactor.

It is found in the cell inner membrane. The enzyme catalyses a quinone + NADH + 5 H(+)(in) = a quinol + NAD(+) + 4 H(+)(out). In terms of biological role, NDH-1 shuttles electrons from NADH, via FMN and iron-sulfur (Fe-S) centers, to quinones in the respiratory chain. The immediate electron acceptor for the enzyme in this species is believed to be ubiquinone. Couples the redox reaction to proton translocation (for every two electrons transferred, four hydrogen ions are translocated across the cytoplasmic membrane), and thus conserves the redox energy in a proton gradient. This chain is NADH-quinone oxidoreductase subunit I, found in Rickettsia bellii (strain OSU 85-389).